The chain runs to 360 residues: Homeobox-leucine zipper protein HOX21 (360 aa).

Disordered regions lie at residues 25–75 (QQAA…SSAQ) and 88–126 (MLGK…EKKR). A compositionally biased stretch (basic residues) spans 36–55 (HHHHHHHGHHHEQQQHHHHL). A compositionally biased stretch (pro residues) spans 56-68 (GPPPPPPPHPHNP). Over residues 97–109 (GDGGGGGDEVNGG) the composition is skewed to gly residues. Residues 121–180 (AGEKKRRLNVEQVRTLEKNFELGNKLEPERKMQLARALGLQPRQVAIWFQNRRARWKTKQ) constitute a DNA-binding region (homeobox). The tract at residues 179–223 (KQLEKDYDALKRQLDAVKAENDALLNHNKKLQAEIVALKGREAAS) is leucine-zipper. 2 disordered regions span residues 233–278 (EASC…GGGG) and 299–328 (GVDI…GNVQ). Residues 234 to 246 (ASCSNRSENSSEI) are compositionally biased toward polar residues.

Belongs to the HD-ZIP homeobox family. Class I subfamily. As to expression, expressed in seedlings, roots, stems, leaf blades and panicles.

It localises to the nucleus. Functionally, probable transcription factor. The polypeptide is Homeobox-leucine zipper protein HOX21 (HOX21) (Oryza sativa subsp. indica (Rice)).